Reading from the N-terminus, the 460-residue chain is NADH-ubiquinone oxidoreductase chain 4 (460 aa).

Helical transmembrane passes span 22–42 (WLWS…LSWF), 59–79 (IDPL…LMIL), 94–113 (RIYI…AFSA), 117–139 (ILFY…RWGN), 148–168 (TYFL…LLFM), 195–215 (FWWT…GVHL), 231–251 (ILAA…IIML), 258–278 (MAYP…SICL), 286–306 (MIAY…LIQT), 310–330 (FAGA…LFCL), 343–362 (LLLA…WWLL), 394–414 (ILLT…MFLM), and 436–456 (LLLT…ELIW).

The protein belongs to the complex I subunit 4 family.

It is found in the mitochondrion membrane. The catalysed reaction is a ubiquinone + NADH + 5 H(+)(in) = a ubiquinol + NAD(+) + 4 H(+)(out). Core subunit of the mitochondrial membrane respiratory chain NADH dehydrogenase (Complex I) that is believed to belong to the minimal assembly required for catalysis. Complex I functions in the transfer of electrons from NADH to the respiratory chain. The immediate electron acceptor for the enzyme is believed to be ubiquinone. The polypeptide is NADH-ubiquinone oxidoreductase chain 4 (MTND4) (Scyliorhinus canicula (Small-spotted catshark)).